The primary structure comprises 90 residues: MGVGGISIWQLLIVLVIILLLFGTKKLRSIGTDLGSAIKGFRNSLRDEERRDAEEAATIEHKQAHKAENPSQRQQADADFKIKSGNDEHK.

The chain crosses the membrane as a helical span at residues 2-22; that stretch reads GVGGISIWQLLIVLVIILLLF. Composition is skewed to basic and acidic residues over residues 45–68 and 76–90; these read LRDEERRDAEEAATIEHKQAHKAE and ADADFKIKSGNDEHK. A disordered region spans residues 45–90; the sequence is LRDEERRDAEEAATIEHKQAHKAENPSQRQQADADFKIKSGNDEHK.

The protein belongs to the TatA/E family. As to quaternary structure, the Tat system comprises two distinct complexes: a TatABC complex, containing multiple copies of TatA, TatB and TatC subunits, and a separate TatA complex, containing only TatA subunits. Substrates initially bind to the TatABC complex, which probably triggers association of the separate TatA complex to form the active translocon.

It is found in the cell inner membrane. Its function is as follows. Part of the twin-arginine translocation (Tat) system that transports large folded proteins containing a characteristic twin-arginine motif in their signal peptide across membranes. TatA could form the protein-conducting channel of the Tat system. The chain is Sec-independent protein translocase protein TatA from Nitrosococcus oceani (strain ATCC 19707 / BCRC 17464 / JCM 30415 / NCIMB 11848 / C-107).